The sequence spans 354 residues: Uroporphyrinogen decarboxylase (354 aa).

Residues 27 to 31 (RQAGR), Asp77, Tyr154, Ser209, and His327 each bind substrate.

This sequence belongs to the uroporphyrinogen decarboxylase family. As to quaternary structure, homodimer.

It localises to the cytoplasm. The enzyme catalyses uroporphyrinogen III + 4 H(+) = coproporphyrinogen III + 4 CO2. It functions in the pathway porphyrin-containing compound metabolism; protoporphyrin-IX biosynthesis; coproporphyrinogen-III from 5-aminolevulinate: step 4/4. Catalyzes the decarboxylation of four acetate groups of uroporphyrinogen-III to yield coproporphyrinogen-III. The sequence is that of Uroporphyrinogen decarboxylase from Saccharophagus degradans (strain 2-40 / ATCC 43961 / DSM 17024).